Consider the following 501-residue polypeptide: Actin-binding protein WASF3 (501 aa).

Positions 57–93 (NEANNFYIRANSLQDRIDRLAVKVTQLDSTVEEVSLQ) form a coiled coil. The residue at position 151 (Tyr-151) is a Phosphotyrosine; by ABL1. The stretch at 162-206 (KEKMLQDTEDKRKEKRRQKEQKRVDGTTREVKKVRKARNRRQEWN) forms a coiled coil. The interval 170 to 443 (EDKRKEKRRQ…PPISDARSDL (274 aa)) is disordered. Over residues 182–192 (QKRVDGTTREV) the composition is skewed to basic and acidic residues. Residues 219-237 (RLSQSVHHGASSEGSLSPD) are compositionally biased toward polar residues. A Phosphotyrosine; by ABL1 modification is found at Tyr-248. The span at 256–267 (HALQAQPATPSY) shows a compositional bias: polar residues. Residues 302 to 312 (QQPPPPPPPQA) show a composition bias toward pro residues. Tyr-337 is modified (phosphotyrosine; by ABL1). Composition is skewed to pro residues over residues 341 to 352 (SGPPPPPPPPMI) and 394 to 410 (APPP…PPGP). Residues 411–422 (SSLSSSPMHGPP) are compositionally biased toward low complexity. A WH2 domain is found at 439 to 456 (ARSDLLAAIRMGIQLKKV). Tyr-485 is modified (phosphotyrosine; by ABL1).

This sequence belongs to the SCAR/WAVE family. In terms of assembly, binds actin and the Arp2/3 complex. Phosphorylation by ABL1 promotes lamellipodia formation and cell migration.

It is found in the cytoplasm. The protein resides in the cytoskeleton. Functionally, downstream effector molecules involved in the transmission of signals from tyrosine kinase receptors and small GTPases to the actin cytoskeleton. Plays a role in the regulation of cell morphology and cytoskeletal organization. Required in the control of cell shape. The sequence is that of Actin-binding protein WASF3 (Wasf3) from Mus musculus (Mouse).